The primary structure comprises 529 residues: O-acetylstemmadenine oxidase (529 aa).

The first 23 residues, 1–23 (MIKKVPIVLSIFCFLLLLSSSHG), serve as a signal peptide directing secretion. The cysteines at positions 32 and 92 are disulfide-linked. Asparagine 52 carries an N-linked (GlcNAc...) asparagine glycan. The FAD-binding PCMH-type domain maps to 70 to 244 (KSPKPLAIIT…VSWKVKLVKV (175 aa)). FAD is bound by residues 102–108 (IRSGGAD), serine 113, 168–169 (VS), 173–177 (GIGGH), and phenylalanine 183. The N-linked (GlcNAc...) asparagine glycan is linked to asparagine 293. Tryptophan 465 provides a ligand contact to FAD.

The protein belongs to the oxygen-dependent FAD-linked oxidoreductase family. FAD serves as cofactor. Expressed in leaf epidermis.

It localises to the endoplasmic reticulum. The protein localises to the vacuole. Its subcellular location is the vesicle. It catalyses the reaction O-acetyl-15alpha-stemmadenine + O2 = precondylocarpine acetate + H2O2. It participates in alkaloid biosynthesis. Its function is as follows. Component of the seco-iridoid and derivatives monoterpenoid indole alkaloids (MIAs, e.g. vinblastine, catharanthine, tabersonine, vincadifformine, vindoline, vincristine, quinine and strychnine) biosynthesis pathway. Converts O-acetylstemmadenine (OAS) to reactive acetylated intermediates, likely dihydroprecondylocarpine acetate. In Catharanthus roseus (Madagascar periwinkle), this protein is O-acetylstemmadenine oxidase.